Consider the following 879-residue polypeptide: Nuclear autoantigen Sp-100 (879 aa).

A2 carries the post-translational modification N-acetylalanine. Position 18 is a phosphoserine (S18). An HSR domain is found at 33 to 149 (DLQRMFTEDQ…IYKGFENVIH (117 aa)). Residues 154–245 (LQESEEEERE…EQCAQKAEPT (92 aa)) form a disordered region. A Phosphoserine modification is found at S157. The D-box; recognition signal for CDC20-mediated degradation motif lies at 165–168 (RSGL). A phosphoserine mark is found at S171, S180, and S228. The segment covering 176–200 (TGENSFRSLTWPPSGSPSHAGTTPP) has biased composition (polar residues). Basic and acidic residues predominate over residues 207–228 (HPCETEQINAKRKDTTSDKDDS). Over residues 229–238 (LGSQQTNEQC) the composition is skewed to polar residues. A Glycyl lysine isopeptide (Lys-Gly) (interchain with G-Cter in SUMO2) cross-link involves residue K241. A PxVxL motif motif is present at residues 284–297 (IQINSCSVRLVDIK). A Glycyl lysine isopeptide (Lys-Gly) (interchain with G-Cter in SUMO) cross-link involves residue K297. Glycyl lysine isopeptide (Lys-Gly) (interchain with G-Cter in SUMO2) cross-links involve residues K300 and K306. S331 and S362 each carry phosphoserine. A sufficient to mediate interaction with ETS1 region spans residues 333 to 478 (GSTDVDEPLE…SSSLRRGSGS (146 aa)). The disordered stretch occupies residues 345 to 386 (ISAPRSEPVINNDNPLESNDEKEGQEATCSRPQIVPEPMDFR). Glycyl lysine isopeptide (Lys-Gly) (interchain with G-Cter in SUMO2) cross-links involve residues K366 and K387. Phosphoserine is present on residues S394, S407, S409, S410, and S451. The interval 401–596 (GQDHDFSESS…KRGPRIPKDE (196 aa)) is disordered. Residues 466 to 482 (ETCSSSLRRGSGSQPQE) show a composition bias toward polar residues. Over residues 530–591 (SGKRRKKRRH…LKRRRKRGPR (62 aa)) the composition is skewed to basic residues. 2 short sequence motifs (nuclear localization signal) span residues 536–553 (KRRH…RKKD) and 568–592 (KRWQ…GPRI). Residue K594 forms a Glycyl lysine isopeptide (Lys-Gly) (interchain with G-Cter in SUMO2) linkage. One can recognise an SAND domain in the interval 595-676 (DENINFKQSE…KVLMENKFLP (82 aa)). 2 consecutive DNA-binding regions (HMG box) follow at residues 677–753 (EPPS…KTYI) and 769–837 (PKRP…AAYR). Residues 717-734 (KKCSETWKTIFAKEKGKF) carry the Nuclear localization signal motif. A disordered region spans residues 835 to 879 (AYRAKGKPNSAKKRVVKAEKSKKKKEEEEDEEDEQEEENEEDDDK). Residues 838-857 (AKGKPNSAKKRVVKAEKSKK) show a composition bias toward basic residues. Over residues 861–879 (EEEDEEDEQEEENEEDDDK) the composition is skewed to acidic residues.

As to quaternary structure, homodimer; isoforms are able to heterodimerize. Interacts with members of the HP1 family of nonhistone chromosomal protein, such as CBX5 and CBX3 via the PxVxL motif. Interacts with ETS1; the interaction is direct and modulates ETS1 transcriptional activity. Interacts with the MRN complex which is composed of two heterodimers RAD50/MRE11 associated with a single NBN; recruits the complex to PML-related bodies. Interacts with HIPK2; positively regulates TP53-dependent transcription. Interacts with CASP8AP2; may negatively regulate CASP8AP2 export from the nucleus to the cytoplasm. Interacts with SUMO1P1/SUMO5. In terms of assembly, (Microbial infection) Interacts with Epstein-Barr virus EBNA-LP; this interaction is important for EBNA-LP coactivator activity. (Microbial infection) Interacts with human cytomegalovirus/HHV-5 protein UL123; may play a role in infection by the virus. Sumoylated. Sumoylation depends on a functional nuclear localization signal but is not necessary for nuclear import or nuclear body targeting. Post-translationally, sumoylated. Sumoylated with SUMO1. Sumoylation depends on a functional nuclear localization signal but is not necessary for nuclear import or nuclear body targeting. Sumoylation may stabilize the interaction with CBX5. In terms of processing, (Microbial infection) Immediate early protein IE1 of human cytomegalovirus (HHV-5) interferes with the sumoylation of SP100. Widely expressed. Sp100-B is expressed only in spleen, tonsil, thymus, mature B-cell line and some T-cell line, but not in brain, liver, muscle or non-lymphoid cell lines.

Its subcellular location is the nucleus. The protein localises to the PML body. The protein resides in the nuclear body. It is found in the cytoplasm. In terms of biological role, together with PML, this tumor suppressor is a major constituent of the PML bodies, a subnuclear organelle involved in a large number of physiological processes including cell growth, differentiation and apoptosis. Functions as a transcriptional coactivator of ETS1 and ETS2 according to PubMed:11909962. Under certain conditions, it may also act as a corepressor of ETS1 preventing its binding to DNA according to PubMed:15247905. Through the regulation of ETS1 it may play a role in angiogenesis, controlling endothelial cell motility and invasion. Through interaction with the MRN complex it may be involved in the regulation of telomeres lengthening. May also regulate TP53-mediated transcription and through CASP8AP2, regulate FAS-mediated apoptosis. Also plays a role in infection by viruses, including human cytomegalovirus and Epstein-Barr virus, through mechanisms that may involve chromatin and/or transcriptional regulation. The chain is Nuclear autoantigen Sp-100 (SP100) from Homo sapiens (Human).